Here is a 285-residue protein sequence, read N- to C-terminus: uncharacterized protein (285 aa).

Ser-168 is a substrate binding site. Catalysis depends on Tyr-181, which acts as the Proton acceptor.

Belongs to the short-chain dehydrogenases/reductases (SDR) family.

This is an uncharacterized protein from Haemophilus influenzae (strain ATCC 51907 / DSM 11121 / KW20 / Rd).